Consider the following 55-residue polypeptide: Beta-toxin Cn7 (55 aa).

Residues 1–55 (KEGYIVNYHDGCKYECYKLGDNDYCLRECKLRVGKGAGGYCYAFACWCTHLYEQA) enclose the LCN-type CS-alpha/beta domain. 3 disulfides stabilise this stretch: Cys16/Cys41, Cys25/Cys46, and Cys29/Cys48.

The protein belongs to the long (3 C-C) scorpion toxin superfamily. Sodium channel inhibitor family. Beta subfamily. As to expression, expressed by the venom gland.

It localises to the secreted. Functionally, beta toxins bind voltage-independently at site-4 of sodium channels (Nav) and shift the voltage of activation toward more negative potentials thereby affecting sodium channel activation and promoting spontaneous and repetitive firing. The sequence is that of Beta-toxin Cn7 from Centruroides noxius (Mexican scorpion).